Consider the following 616-residue polypeptide: tRNA uridine 5-carboxymethylaminomethyl modification enzyme MnmG (616 aa).

Residues Gly10–Gly15, Val122, and Ser177 contribute to the FAD site. NAD(+) is bound at residue Gly271–Phe285. Residue Gln368 coordinates FAD.

This sequence belongs to the MnmG family. Homodimer. Heterotetramer of two MnmE and two MnmG subunits. Requires FAD as cofactor.

Its subcellular location is the cytoplasm. Functionally, NAD-binding protein involved in the addition of a carboxymethylaminomethyl (cmnm) group at the wobble position (U34) of certain tRNAs, forming tRNA-cmnm(5)s(2)U34. This chain is tRNA uridine 5-carboxymethylaminomethyl modification enzyme MnmG, found in Malacoplasma penetrans (strain HF-2) (Mycoplasma penetrans).